The sequence spans 541 residues: MGCIKSKEDKGPAMKYRTDNTPEPISSHVSHYGSDSSQATQSPAIKGSAVNFNSHSMTPFGGPSGMTPFGGASSSFSAVPSPYPSTLTGGVTVFVALYDYEARTTDDLSFKKGERFQIINNTEGDWWEARSIATGKTGYIPSNYVAPADSIQAEEWYFGKMGRKDAERLLLNPGNQRGIFLVRESETTKGAYSLSIRDWDEVRGDNVKHYKIRKLDNGGYYITTRAQFESLQKLVKHYREHADGLCHKLTTVCPTVKPQTQGLAKDAWEIPRESLRLEVKLGQGCFGEVWMGTWNGTTKVAIKTLKPGTMMPEAFLQEAQIMKKLRHDKLVPLYAVVSEEPIYIVTEFMTKGSLLDFLKEGEGKFLKLPQLVDMAAQIADGMAYIERMNYIHRDLRAANILVGDNLVCKIADFGLARLIEDNEYTARQGAKFPIKWTAPEAALYGRFTIKSDVWSFGILLTELVTKGRVPYPGMVNREVLEQVERGYRMPCPQGCPESLHELMKLCWKKDPDERPTFEYIQSFLEDYFTATEPQYQPGDNL.

A compositionally biased stretch (basic and acidic residues) spans 1–20 (MGCIKSKEDKGPAMKYRTDN). Positions 1 to 43 (MGCIKSKEDKGPAMKYRTDNTPEPISSHVSHYGSDSSQATQSP) are disordered. Gly-2 carries N-myristoyl glycine lipidation. Cys-3 is lipidated: S-palmitoyl cysteine; in membrane form. Residues 26 to 37 (SSHVSHYGSDSS) show a composition bias toward low complexity. In terms of domain architecture, SH3 spans 89-150 (GGVTVFVALY…PSNYVAPADS (62 aa)). The SH2 domain maps to 156 to 253 (WYFGKMGRKD…GLCHKLTTVC (98 aa)). Residues 275 to 528 (LRLEVKLGQG…YIQSFLEDYF (254 aa)) form the Protein kinase domain. ATP is bound by residues 281 to 289 (LGQGCFGEV) and Lys-303. Asp-394 acts as the Proton acceptor in catalysis. Tyr-424 carries the post-translational modification Phosphotyrosine; by autocatalysis. A Phosphotyrosine; by CSK modification is found at Tyr-535.

The protein belongs to the protein kinase superfamily. Tyr protein kinase family. SRC subfamily. Post-translationally, autophosphorylation at Tyr-424 maintains enzyme activity. Palmitoylation at Cys-3 promotes membrane localization.

The protein resides in the cell membrane. It is found in the cytoplasm. Its subcellular location is the cytoskeleton. The protein localises to the microtubule organizing center. It localises to the centrosome. The protein resides in the cytosol. It is found in the cell junction. The enzyme catalyses L-tyrosyl-[protein] + ATP = O-phospho-L-tyrosyl-[protein] + ADP + H(+). In terms of biological role, non-receptor protein tyrosine kinase that is involved in the regulation of cell growth and survival, apoptosis, cell-cell adhesion, cytoskeleton remodeling, differentiation, G2/M progression and cytokinesis. This is Tyrosine-protein kinase Yes (YES1) from Gallus gallus (Chicken).